Consider the following 315-residue polypeptide: Indoleacetate decarboxylase activating enzyme (315 aa).

In terms of domain architecture, Radical SAM core spans 21–311 (HDGPGIRTNV…ADIIEAHGVK (291 aa)). [4Fe-4S] cluster contacts are provided by cysteine 35, cysteine 39, cysteine 42, cysteine 61, cysteine 64, cysteine 67, cysteine 71, cysteine 98, cysteine 101, cysteine 106, and cysteine 110. 4Fe-4S ferredoxin-type domains follow at residues 52-81 (PQLL…AITD) and 89-120 (GYVH…IAGE). Residues glycine 149, 198-200 (DCK), and histidine 271 contribute to the S-adenosyl-L-methionine site.

The protein belongs to the organic radical-activating enzymes family. [4Fe-4S] cluster is required as a cofactor.

The catalysed reaction is glycyl-[protein] + reduced [flavodoxin] + S-adenosyl-L-methionine = glycin-2-yl radical-[protein] + semiquinone [flavodoxin] + 5'-deoxyadenosine + L-methionine + H(+). Its function is as follows. Catalyzes activation of the indoleacetate decarboxylase OsIAD under anaerobic conditions by generation of an organic free radical on a glycine residue, via a homolytic cleavage of S-adenosyl-L-methionine (SAM). This chain is Indoleacetate decarboxylase activating enzyme, found in Tractidigestivibacter scatoligenes (Olsenella scatoligenes).